The following is a 100-amino-acid chain: NADH-quinone oxidoreductase subunit K (100 aa).

3 consecutive transmembrane segments (helical) span residues 2–22 (VPTTYYLALSGLLFALGMIGV), 29–49 (IMVFLSVELMLNAANLSLVAF), and 63–83 (FIVMTLAAAEVAIGLAIIVAI).

It belongs to the complex I subunit 4L family. As to quaternary structure, NDH-1 is composed of 15 different subunits. Subunits NuoA, H, J, K, L, M, N constitute the membrane sector of the complex.

The protein localises to the cell membrane. The enzyme catalyses a quinone + NADH + 5 H(+)(in) = a quinol + NAD(+) + 4 H(+)(out). Its function is as follows. NDH-1 shuttles electrons from NADH, via FMN and iron-sulfur (Fe-S) centers, to quinones in the respiratory chain. The immediate electron acceptor for the enzyme in this species is believed to be a menaquinone. Couples the redox reaction to proton translocation (for every two electrons transferred, four hydrogen ions are translocated across the cytoplasmic membrane), and thus conserves the redox energy in a proton gradient. This Deinococcus deserti (strain DSM 17065 / CIP 109153 / LMG 22923 / VCD115) protein is NADH-quinone oxidoreductase subunit K.